Here is a 449-residue protein sequence, read N- to C-terminus: Tubulin beta chain (449 aa).

Residues Q11, E69, S138, G142, T143, G144, N204, and N226 each coordinate GTP. E69 serves as a coordination point for Mg(2+). The tract at residues 426–449 is disordered; sequence QDATAEEEGEFDEEEGVMDAEGAA. Residues 429-443 show a composition bias toward acidic residues; that stretch reads TAEEEGEFDEEEGVM.

The protein belongs to the tubulin family. Dimer of alpha and beta chains. A typical microtubule is a hollow water-filled tube with an outer diameter of 25 nm and an inner diameter of 15 nM. Alpha-beta heterodimers associate head-to-tail to form protofilaments running lengthwise along the microtubule wall with the beta-tubulin subunit facing the microtubule plus end conferring a structural polarity. Microtubules usually have 13 protofilaments but different protofilament numbers can be found in some organisms and specialized cells. It depends on Mg(2+) as a cofactor.

Its subcellular location is the cytoplasm. It localises to the cytoskeleton. In terms of biological role, tubulin is the major constituent of microtubules, a cylinder consisting of laterally associated linear protofilaments composed of alpha- and beta-tubulin heterodimers. Microtubules grow by the addition of GTP-tubulin dimers to the microtubule end, where a stabilizing cap forms. Below the cap, tubulin dimers are in GDP-bound state, owing to GTPase activity of alpha-tubulin. This chain is Tubulin beta chain, found in Eimeria tenella (Coccidian parasite).